We begin with the raw amino-acid sequence, 207 residues long: Cytidylyl-2-hydroxypropylphosphonate hydrolase (207 aa).

CDP-binding residues include Trp68, Arg74, Gln76, and Ser77. 4 residues coordinate a divalent metal cation: Asn109, Asp125, Glu127, and Asp129. Lys142 serves as a coordination point for CDP. Lys142 functions as the Proton donor in the catalytic mechanism. Asp143 lines the a divalent metal cation pocket.

This sequence belongs to the FomD family. Mn(2+) is required as a cofactor. Co(2+) serves as cofactor.

The enzyme catalyses cytidine 5'-({hydroxy[(S)-2-hydroxypropyl]phosphonoyl}phosphate) + H2O = (S)-2-hydroxypropylphosphonate + CMP + H(+). The protein operates within antibiotic biosynthesis; fosfomycin biosynthesis. Its activity is regulated as follows. Hydrolysis of (S)-HPP-CMP is inhibited by CDP. Its function is as follows. Involved in fosfomycin biosynthesis. Catalyzes the hydrolysis of cytidylyl (S)-2-hydroxypropylphosphonate ((S)-HPP-CMP) to give (S)-2-hydroxypropylphosphonate ((S)-HPP) and CMP. Can also hydrolyze (R)-HPP-CMP and cytidylyl 2-hydroxyethylphosphonate (HEP-CMP), which is a biosynthetic intermediate before C-methylation, but the catalytic efficiency is much higher with (S)-HPP-CMP. The chain is Cytidylyl-2-hydroxypropylphosphonate hydrolase from Streptomyces fradiae (Streptomyces roseoflavus).